The chain runs to 513 residues: Bifunctional purine biosynthesis protein PurH (513 aa).

An MGS-like domain is found at 1–147; it reads MIQIKRALVS…KNHKNVVVLT (147 aa).

Belongs to the PurH family.

It carries out the reaction (6R)-10-formyltetrahydrofolate + 5-amino-1-(5-phospho-beta-D-ribosyl)imidazole-4-carboxamide = 5-formamido-1-(5-phospho-D-ribosyl)imidazole-4-carboxamide + (6S)-5,6,7,8-tetrahydrofolate. The catalysed reaction is IMP + H2O = 5-formamido-1-(5-phospho-D-ribosyl)imidazole-4-carboxamide. The protein operates within purine metabolism; IMP biosynthesis via de novo pathway; 5-formamido-1-(5-phospho-D-ribosyl)imidazole-4-carboxamide from 5-amino-1-(5-phospho-D-ribosyl)imidazole-4-carboxamide (10-formyl THF route): step 1/1. Its pathway is purine metabolism; IMP biosynthesis via de novo pathway; IMP from 5-formamido-1-(5-phospho-D-ribosyl)imidazole-4-carboxamide: step 1/1. This is Bifunctional purine biosynthesis protein PurH from Leptospira biflexa serovar Patoc (strain Patoc 1 / Ames).